We begin with the raw amino-acid sequence, 277 residues long: Shikimate dehydrogenase (NADP(+)) (277 aa).

Shikimate is bound by residues 20–22 and T67; that span reads SLS. The Proton acceptor role is filled by K71. D83 serves as a coordination point for NADP(+). Residues N92 and D107 each contribute to the shikimate site. Residues 131-135 and I219 contribute to the NADP(+) site; that span reads GAGGV. Y221 contacts shikimate. G242 lines the NADP(+) pocket.

It belongs to the shikimate dehydrogenase family. In terms of assembly, homodimer.

The catalysed reaction is shikimate + NADP(+) = 3-dehydroshikimate + NADPH + H(+). It functions in the pathway metabolic intermediate biosynthesis; chorismate biosynthesis; chorismate from D-erythrose 4-phosphate and phosphoenolpyruvate: step 4/7. Its function is as follows. Involved in the biosynthesis of the chorismate, which leads to the biosynthesis of aromatic amino acids. Catalyzes the reversible NADPH linked reduction of 3-dehydroshikimate (DHSA) to yield shikimate (SA). The sequence is that of Shikimate dehydrogenase (NADP(+)) from Pelobacter propionicus (strain DSM 2379 / NBRC 103807 / OttBd1).